Reading from the N-terminus, the 431-residue chain is tRNA(Ile)-lysidine synthase (431 aa).

25-30 contributes to the ATP binding site; sequence SGGPDS.

It belongs to the tRNA(Ile)-lysidine synthase family.

It is found in the cytoplasm. It carries out the reaction cytidine(34) in tRNA(Ile2) + L-lysine + ATP = lysidine(34) in tRNA(Ile2) + AMP + diphosphate + H(+). Its function is as follows. Ligates lysine onto the cytidine present at position 34 of the AUA codon-specific tRNA(Ile) that contains the anticodon CAU, in an ATP-dependent manner. Cytidine is converted to lysidine, thus changing the amino acid specificity of the tRNA from methionine to isoleucine. This Lactobacillus gasseri (strain ATCC 33323 / DSM 20243 / BCRC 14619 / CIP 102991 / JCM 1131 / KCTC 3163 / NCIMB 11718 / NCTC 13722 / AM63) protein is tRNA(Ile)-lysidine synthase.